Here is a 1086-residue protein sequence, read N- to C-terminus: Lon protease homolog, mitochondrial (1086 aa).

The transit peptide at 1–55 (MLRTSCTSSLRRVVGKYVVSPLVASQIRFATSSVRSQPYLLNSELTELPAQFKRY) directs the protein to the mitochondrion. The segment at 61–176 (TEKPEGDVPE…EPNEIVTNAG (116 aa)) is disordered. Residues 69-83 (PESGPEPSGESGISE) are compositionally biased toward low complexity. Residues 85–120 (SNVENDKHDGNDEIKPEAEKNEKDEIEKPEIDKDAI) are compositionally biased toward basic and acidic residues. Low complexity predominate over residues 124–163 (DGVSESSVENVSGSSSAAGGASAPPSGNSNNNNNNNNNNN). A Lon N-terminal domain is found at 183–406 (LLAIPMKDRP…KALELLKVEL (224 aa)). Residue 558-565 (GPPGTGKT) coordinates ATP. Composition is skewed to basic and acidic residues over residues 767–782 (EAREGESKSKSEEAKS) and 815–827 (KVDEAKPVESEEL). 2 disordered regions span residues 767-788 (EAREGESKSKSEEAKSEAITGS) and 800-835 (KAQSIEEPSVESASQKVDEAKPVESEELKSDEEEEE). The Lon proteolytic domain maps to 871–1059 (IPPPGVATGL…QDVFDEIFPN (189 aa)). Catalysis depends on residues Ser965 and Lys1008.

This sequence belongs to the peptidase S16 family. In terms of assembly, homohexamer or homoheptamer. Organized in a ring with a central cavity.

Its subcellular location is the mitochondrion matrix. The enzyme catalyses Hydrolysis of proteins in presence of ATP.. Its function is as follows. ATP-dependent serine protease that mediates the selective degradation of misfolded, unassembled or oxidatively damaged polypeptides as well as certain short-lived regulatory proteins in the mitochondrial matrix. May also have a chaperone function in the assembly of inner membrane protein complexes. Participates in the regulation of mitochondrial gene expression and in the maintenance of the integrity of the mitochondrial genome. Binds to mitochondrial DNA in a site-specific manner. The protein is Lon protease homolog, mitochondrial of Scheffersomyces stipitis (strain ATCC 58785 / CBS 6054 / NBRC 10063 / NRRL Y-11545) (Yeast).